The chain runs to 274 residues: Large ribosomal subunit protein uL2 (274 aa).

Disordered stretches follow at residues 28–53 (APYA…TVRH) and 223–274 (VAMN…RRNK). A compositionally biased stretch (low complexity) spans 39–48 (KSGGRNNNGR).

The protein belongs to the universal ribosomal protein uL2 family. In terms of assembly, part of the 50S ribosomal subunit. Forms a bridge to the 30S subunit in the 70S ribosome.

Its function is as follows. One of the primary rRNA binding proteins. Required for association of the 30S and 50S subunits to form the 70S ribosome, for tRNA binding and peptide bond formation. It has been suggested to have peptidyltransferase activity; this is somewhat controversial. Makes several contacts with the 16S rRNA in the 70S ribosome. This is Large ribosomal subunit protein uL2 from Pseudoalteromonas atlantica (strain T6c / ATCC BAA-1087).